We begin with the raw amino-acid sequence, 62 residues long: Temporin-HN1 (62 aa).

An N-terminal signal peptide occupies residues 1–22 (MFTLKKSLLLLLFLGTINLSLS). The propeptide occupies 23 to 44 (EQERNAEEERRDDPEEMDAEVE). Position 60 is a leucine amide (leucine 60).

As to expression, expressed by the skin glands.

The protein resides in the secreted. In terms of biological role, has antimicrobial activity against some Gram-positive bacteria and fungi but has no activity against a range of Gram-negative bacteria except P.faecalis. Active against the Gram-positive bacteria S.aureus ATCC 25923 (MIC=37.5 uM), S.carnosus KHS (MIC=37.5 uM), B.licheniformis X39 (MIC=19 uM), R.rhodochrous X15 (MIC=4.8 uM), is virtually inactive against E.faecalis 981 (MIC=150 uM) and inactive against E.faecium 091299. Has some antimicrobial activity against the Gram-negative bacterium P.faecalis X29 (MIC=75 uM) and is inactive against E.coli, P.aeruginosa and S.typhi. Has antifungal activity against C.albicans ATCC 2002 (MIC=19 uM) and lower activity against the slime mold 090223 (MIC=75 uM). Has low hemolytic activity against human erythrocytes (LC(50)=75 uM). This is Temporin-HN1 from Odorrana hainanensis (Odor frog).